Consider the following 502-residue polypeptide: Glycerol kinase (502 aa).

Thr-14 is a binding site for ADP. ATP contacts are provided by Thr-14, Thr-15, and Ser-16. Thr-14 serves as a coordination point for sn-glycerol 3-phosphate. Residue Arg-18 participates in ADP binding. The sn-glycerol 3-phosphate site is built by Arg-84, Glu-85, Tyr-136, and Asp-246. Positions 84, 85, 136, 246, and 247 each coordinate glycerol. ADP is bound by residues Thr-268 and Gly-311. ATP-binding residues include Thr-268, Gly-311, Gln-315, and Gly-412. Residues Gly-412 and Asn-416 each contribute to the ADP site.

This sequence belongs to the FGGY kinase family. As to quaternary structure, homotetramer and homodimer (in equilibrium). Heterodimer with EIIA-Glc. Binds 1 zinc ion per glycerol kinase EIIA-Glc dimer. The zinc ion is important for dimerization.

The catalysed reaction is glycerol + ATP = sn-glycerol 3-phosphate + ADP + H(+). It participates in polyol metabolism; glycerol degradation via glycerol kinase pathway; sn-glycerol 3-phosphate from glycerol: step 1/1. With respect to regulation, activity of this regulatory enzyme is affected by several metabolites. Allosterically and non-competitively inhibited by fructose 1,6-bisphosphate (FBP) and unphosphorylated phosphocarrier protein EIIA-Glc (III-Glc), an integral component of the bacterial phosphotransferase (PTS) system. Key enzyme in the regulation of glycerol uptake and metabolism. Catalyzes the phosphorylation of glycerol to yield sn-glycerol 3-phosphate. In Escherichia coli O7:K1 (strain IAI39 / ExPEC), this protein is Glycerol kinase.